Here is a 109-residue protein sequence, read N- to C-terminus: Large ribosomal subunit protein uL22 (109 aa).

This sequence belongs to the universal ribosomal protein uL22 family. In terms of assembly, part of the 50S ribosomal subunit.

In terms of biological role, this protein binds specifically to 23S rRNA; its binding is stimulated by other ribosomal proteins, e.g. L4, L17, and L20. It is important during the early stages of 50S assembly. It makes multiple contacts with different domains of the 23S rRNA in the assembled 50S subunit and ribosome. The globular domain of the protein is located near the polypeptide exit tunnel on the outside of the subunit, while an extended beta-hairpin is found that lines the wall of the exit tunnel in the center of the 70S ribosome. The polypeptide is Large ribosomal subunit protein uL22 (Thiobacillus denitrificans (strain ATCC 25259 / T1)).